A 369-amino-acid chain; its full sequence is UDP-glucose 4-epimerase 4 (369 aa).

19–50 (TVLVTGGAGYIGSHTVLQLLAAGFRVVVADSL) serves as a coordination point for NAD(+). A substrate-binding site is contributed by Ser-144. The active-site Proton acceptor is the Tyr-168.

This sequence belongs to the NAD(P)-dependent epimerase/dehydratase family. It depends on NAD(+) as a cofactor.

The enzyme catalyses UDP-alpha-D-glucose = UDP-alpha-D-galactose. It participates in carbohydrate metabolism; galactose metabolism. Its function is as follows. Catalyzes the interconversion between UDP-glucose and UDP-galactose. This chain is UDP-glucose 4-epimerase 4 (UGE-4), found in Oryza sativa subsp. japonica (Rice).